The sequence spans 174 residues: RNA pyrophosphohydrolase (174 aa).

One can recognise a Nudix hydrolase domain in the interval 6–149; the sequence is GFRANVGIII…KRDVYRKVMK (144 aa). The Nudix box motif lies at 38–59; the sequence is GGVDDGESAEEAMYRELYEEVG.

It belongs to the Nudix hydrolase family. RppH subfamily. A divalent metal cation is required as a cofactor.

In terms of biological role, accelerates the degradation of transcripts by removing pyrophosphate from the 5'-end of triphosphorylated RNA, leading to a more labile monophosphorylated state that can stimulate subsequent ribonuclease cleavage. The protein is RNA pyrophosphohydrolase of Shewanella oneidensis (strain ATCC 700550 / JCM 31522 / CIP 106686 / LMG 19005 / NCIMB 14063 / MR-1).